The following is a 215-amino-acid chain: Adenylate kinase (215 aa).

Residue 10–15 (GAGKGT) participates in ATP binding. Positions 30–59 (STGDMLRAAVKAGTELGLKAKSVMDAGGLV) are NMP. AMP is bound by residues threonine 31, arginine 36, 57–59 (GLV), 85–88 (GFPR), and glutamine 92. The segment at 122–159 (GRRVHPASGRVYHTEYNPPKVAGKDDVSGEELVQREDD) is LID. ATP-binding positions include arginine 123 and 132–133 (VY). Residues arginine 156 and arginine 167 each contribute to the AMP site. Glycine 201 serves as a coordination point for ATP.

The protein belongs to the adenylate kinase family. Monomer.

It is found in the cytoplasm. It carries out the reaction AMP + ATP = 2 ADP. Its pathway is purine metabolism; AMP biosynthesis via salvage pathway; AMP from ADP: step 1/1. In terms of biological role, catalyzes the reversible transfer of the terminal phosphate group between ATP and AMP. Plays an important role in cellular energy homeostasis and in adenine nucleotide metabolism. The chain is Adenylate kinase from Ectopseudomonas mendocina (strain ymp) (Pseudomonas mendocina).